The sequence spans 382 residues: tRNA (guanine-N(7)-)-methyltransferase non-catalytic subunit wuho (382 aa).

Residues 40–59 (VKDTDAGNEPNGNQTQPTPA) form a disordered region. A compositionally biased stretch (polar residues) spans 49–59 (PNGNQTQPTPA). 2 WD repeats span residues 149–190 (GHMS…ECFC) and 192–230 (GHTEYVGGIEIIPSEKLISVSGDRTLRLWDVTEGKELSK).

It belongs to the WD repeat TRM82 family. In terms of assembly, forms a heterodimer with the catalytic subunit.

It is found in the nucleus. The protein operates within tRNA modification; N(7)-methylguanine-tRNA biosynthesis. Functionally, required for the formation of N(7)-methylguanine at position 46 (m7G46) in tRNA. In the complex, it is required to stabilize and induce conformational changes of the catalytic subunit. The sequence is that of tRNA (guanine-N(7)-)-methyltransferase non-catalytic subunit wuho from Anopheles gambiae (African malaria mosquito).